A 159-amino-acid chain; its full sequence is MQIWHMEPFPCGDRRLPHHVFPPKKITTTQLGQLAGVQYYKVDLDDTASMKKRLSAVKTEKNVTFTDMFTVSETMLEFDDKMEQFYEPQVQKEDVISLVVEGTCYYDVEPEDDSWIRVQVEKGDLIVIPKGLSHRFTTTPQNFVKIQRFFSRKVEGNQG.

It belongs to the acireductone dioxygenase (ARD) family.

The protein resides in the cytoplasm. It is found in the nucleus. In terms of biological role, probable inactive acireductone dioxygenase. The chain is Probable inactive acireductone dioxygenase 1 from Caenorhabditis elegans.